We begin with the raw amino-acid sequence, 654 residues long: Pyoverdine export ATP-binding/permease protein PvdT (654 aa).

Residues 6–245 (IELCDIRKAY…AHKGIQAEEL (240 aa)) enclose the ABC transporter domain. Position 43–50 (43–50 (GASGSGKS)) interacts with ATP. A run of 4 helical transmembrane segments spans residues 282–302 (ALTLLGIIIGVASVVVMLAVG), 529–549 (LSLMLGAIAAISLLVGGIGVM), 584–604 (AIMLSMVGGLTGIALALVVGA), and 614–634 (AFALPAIVGAFACAVITGVVF).

The protein belongs to the ABC transporter superfamily. Macrolide exporter (TC 3.A.1.122) family. Part of the tripartite efflux system PvdRT-OpmQ, which is composed of an inner membrane component with both ATPase and permease domains, PvdT, a periplasmic membrane fusion protein, PvdR, and an outer membrane component, OpmQ.

Its subcellular location is the cell inner membrane. Its activity is regulated as follows. Has a basal ATPase activity that is stimulated by PvdR. In vitro, interaction with PVD influences the affinity of PvdT to PvdR. Its function is as follows. Part of the tripartite efflux system PvdRT-OpmQ required for the secretion into the extracellular milieu of the siderophore pyoverdine (PVD), which is involved in iron acquisition. This subunit binds PVD and drives its secretion by hydrolyzing ATP. The system is responsible for export of newly synthesized PVD after the final steps of biosynthesis have taken place in the periplasm. It is also responsible for recycling of PVD after internalization of ferri-PVD into the periplasm by the outer-membrane receptor FpvA and release of iron from PVD, thus making PVD available for new cycles of iron uptake. Contributes to resistance against ampicillin. This Pseudomonas putida (strain ATCC 47054 / DSM 6125 / CFBP 8728 / NCIMB 11950 / KT2440) protein is Pyoverdine export ATP-binding/permease protein PvdT.